Reading from the N-terminus, the 277-residue chain is tRNA uridine(34) hydroxylase (277 aa).

The region spanning 126–221 (SSPDVHVIDT…YLETMRGDDS (96 aa)) is the Rhodanese domain. Cysteine 181 functions as the Cysteine persulfide intermediate in the catalytic mechanism.

The protein belongs to the TrhO family.

It catalyses the reaction uridine(34) in tRNA + AH2 + O2 = 5-hydroxyuridine(34) in tRNA + A + H2O. Functionally, catalyzes oxygen-dependent 5-hydroxyuridine (ho5U) modification at position 34 in tRNAs. In Anaplasma marginale (strain St. Maries), this protein is tRNA uridine(34) hydroxylase.